Consider the following 272-residue polypeptide: uncharacterized protein (272 aa).

Residues Asp-71 and Glu-163 contribute to the active site.

It belongs to the glycosyl hydrolase 25 family.

This is an uncharacterized protein from Escherichia coli (strain K12).